The following is a 190-amino-acid chain: Probable nicotinate-nucleotide adenylyltransferase (190 aa).

Belongs to the NadD family.

The catalysed reaction is nicotinate beta-D-ribonucleotide + ATP + H(+) = deamido-NAD(+) + diphosphate. It participates in cofactor biosynthesis; NAD(+) biosynthesis; deamido-NAD(+) from nicotinate D-ribonucleotide: step 1/1. In terms of biological role, catalyzes the reversible adenylation of nicotinate mononucleotide (NaMN) to nicotinic acid adenine dinucleotide (NaAD). The protein is Probable nicotinate-nucleotide adenylyltransferase of Borrelia turicatae (strain 91E135).